Here is a 292-residue protein sequence, read N- to C-terminus: 4-hydroxybenzoate solanesyltransferase (292 aa).

The next 9 membrane-spanning stretches (helical) occupy residues Leu28 to Leu48, Pro49 to Asn69, Val97 to Thr117, Pro118 to Lys138, Val140 to Trp160, Trp172 to Ala192, Val217 to Leu237, Pro239 to Leu259, and Ile272 to Leu292.

This sequence belongs to the UbiA prenyltransferase family. Mg(2+) serves as cofactor.

It localises to the cell inner membrane. The enzyme catalyses all-trans-nonaprenyl diphosphate + 4-hydroxybenzoate = 4-hydroxy-3-(all-trans-nonaprenyl)benzoate + diphosphate. Catalyzes the prenylation of para-hydroxybenzoate (PHB) with an all-trans polyprenyl group. Mediates the second step in the final reaction sequence of plastoquinone-9 (PQ-9) biosynthesis, which is the condensation of the polyisoprenoid side chain with PHB, generating the first membrane-bound Q intermediate 4-hydroxy-3-solanesylbenzoate. The polypeptide is 4-hydroxybenzoate solanesyltransferase (Synechocystis sp. (strain ATCC 27184 / PCC 6803 / Kazusa)).